The sequence spans 544 residues: MSAKQIVFSTDARDRLLRGVELLNNAVKVTLGPKGRNVVIDKSYGAPRITKDGVSVAKEIELEDKFENMGAQMVRAVASKTNDLAGDGTTTATVLAASIFREGAKLVSVGMNPMDLKRGIDLGVAAVLAEIKARATKVISSSEIAQVGTIAANGDAGVGEMIARAMEKVGNEGVITVEEARTADTELDVVEGMQFDRGYLSPYFVTNAEKMRVELEDPYILIHEKKLGSLQAMLPILEAAVQSGKPLLIISEDVEGEVLATLVVNRLRGGLKIAAVKTPGFGDRRKAMLEDIAVLTAGQMISEDLGIKLENVTLDMLGRARRVLIEKDTTTIIDGSGDKASIQARVSQIKAQIEETASDYDKEKLQERLAKLAGGVAVIRVGGATELEVKEKKDRIDDALNATRAAVEEGIVPGGGVALLRAKSALVGLTDDNADVTAGISIVRRALEAPIRQIADNAGVEGSIVVGKLVDGRDHNQGFDAQTETYVDMIKAGIVDPAKVVRTALRDAGSIASLLITAEAMIADIPERGSPQSTGNGAVDSMGY.

ATP-binding positions include 30-33 (TLGP), Lys-51, 87-91 (DGTTT), Gly-415, and Asp-496.

The protein belongs to the chaperonin (HSP60) family. Forms a cylinder of 14 subunits composed of two heptameric rings stacked back-to-back. Interacts with the co-chaperonin GroES.

It localises to the cytoplasm. The catalysed reaction is ATP + H2O + a folded polypeptide = ADP + phosphate + an unfolded polypeptide.. Functionally, together with its co-chaperonin GroES, plays an essential role in assisting protein folding. The GroEL-GroES system forms a nano-cage that allows encapsulation of the non-native substrate proteins and provides a physical environment optimized to promote and accelerate protein folding. This Rhizobium meliloti (strain 1021) (Ensifer meliloti) protein is Chaperonin GroEL 3.